We begin with the raw amino-acid sequence, 452 residues long: UDP-N-acetylmuramate--L-alanine ligase (452 aa).

110–116 (GTHGKTT) is a binding site for ATP.

It belongs to the MurCDEF family.

The protein localises to the cytoplasm. It catalyses the reaction UDP-N-acetyl-alpha-D-muramate + L-alanine + ATP = UDP-N-acetyl-alpha-D-muramoyl-L-alanine + ADP + phosphate + H(+). Its pathway is cell wall biogenesis; peptidoglycan biosynthesis. Its function is as follows. Cell wall formation. The chain is UDP-N-acetylmuramate--L-alanine ligase from Francisella philomiragia subsp. philomiragia (strain ATCC 25017 / CCUG 19701 / FSC 153 / O#319-036).